The chain runs to 264 residues: Thymidylate synthase (264 aa).

Arginine 21 is a binding site for dUMP. Histidine 51 contacts (6R)-5,10-methylene-5,6,7,8-tetrahydrofolate. 126–127 contributes to the dUMP binding site; sequence RR. The active-site Nucleophile is the cysteine 146. DUMP contacts are provided by residues 166 to 169, asparagine 177, and 207 to 209; these read RSCD and HLY. Aspartate 169 is a binding site for (6R)-5,10-methylene-5,6,7,8-tetrahydrofolate. Alanine 263 contacts (6R)-5,10-methylene-5,6,7,8-tetrahydrofolate.

It belongs to the thymidylate synthase family. Bacterial-type ThyA subfamily. In terms of assembly, homodimer.

The protein resides in the cytoplasm. The catalysed reaction is dUMP + (6R)-5,10-methylene-5,6,7,8-tetrahydrofolate = 7,8-dihydrofolate + dTMP. Its pathway is pyrimidine metabolism; dTTP biosynthesis. Catalyzes the reductive methylation of 2'-deoxyuridine-5'-monophosphate (dUMP) to 2'-deoxythymidine-5'-monophosphate (dTMP) while utilizing 5,10-methylenetetrahydrofolate (mTHF) as the methyl donor and reductant in the reaction, yielding dihydrofolate (DHF) as a by-product. This enzymatic reaction provides an intracellular de novo source of dTMP, an essential precursor for DNA biosynthesis. The sequence is that of Thymidylate synthase from Yersinia pseudotuberculosis serotype O:1b (strain IP 31758).